The sequence spans 97 residues: Putative CC-type chemokine U83 (97 aa).

Cystine bridges form between Cys32–Cys62 and Cys33–Cys76.

This sequence belongs to the intercrine beta (chemokine CC) family. Highly divergent.

The chain is Putative CC-type chemokine U83 (U83) from Human herpesvirus 6A (strain Uganda-1102) (HHV-6 variant A).